Reading from the N-terminus, the 1710-residue chain is Ankyrin repeat domain-containing protein 26 (1710 aa).

The disordered stretch occupies residues 1 to 41; the sequence is MKKIFSKKGESPLGSFARRQRSSAGGGGEPGEGAYSQPGYH. Phosphoserine is present on residues S11 and S15. ANK repeat units lie at residues 45 to 75, 79 to 108, 112 to 141, 145 to 174, and 178 to 207; these read RDLG…GLND, MNRT…QLNV, ENRT…DPNL, HGNT…NIEA, and DDLT…NVNA. Residues 222–274 form a disordered region; the sequence is KEERIPKHSSQNSNSVDESSEDSLSRLSGKPGVDDSWPTSDDEDLNFDTKNVP. Phosphoserine is present on residues S241, S261, S489, and S530. Positions 504-630 are disordered; sequence DSVPNKAGGM…EKRTSKESVN (127 aa). The stretch at 529–566 forms a coiled coil; that stretch reads ASEEEQEREGSENNQPQVEEERKKHRNNEMEVSANIHD. A compositionally biased stretch (acidic residues) spans 569-580; sequence TDDAEDDDDDDG. 2 stretches are compositionally biased toward basic and acidic residues: residues 586-602 and 613-626; these read KSGE…ENKE and KEVK…RTSK. S631 is subject to Phosphoserine. A compositionally biased stretch (acidic residues) spans 650 to 660; that stretch reads DSSLSEIDEDE. Positions 650–698 are disordered; sequence DSSLSEIDEDEGRPTKKTSNEKNKVKNQIQSMDDVDDLTQSSETASEDC. The segment covering 661–673 has biased composition (basic and acidic residues); it reads GRPTKKTSNEKNK. Coiled coils occupy residues 743–873, 905–1472, 1517–1587, and 1649–1674; these read KNHC…NARM, EEEK…MVEL, NNFA…NTKL, and LSKM…LESG. Residues 892–912 are disordered; it reads AQKKMNSENSHSHEEEKDLSH.

In terms of assembly, interacts with TRIO. Interacts with GPS2. Interacts with CCDC85B. Interacts with HMMR.

In terms of biological role, acts as a regulator of adipogenesis. Involved in the regulation of the feeding behavior. This is Ankyrin repeat domain-containing protein 26 from Homo sapiens (Human).